Here is an 89-residue protein sequence, read N- to C-terminus: Small ribosomal subunit protein uS15 (89 aa).

It belongs to the universal ribosomal protein uS15 family. In terms of assembly, part of the 30S ribosomal subunit. Forms a bridge to the 50S subunit in the 70S ribosome, contacting the 23S rRNA.

In terms of biological role, one of the primary rRNA binding proteins, it binds directly to 16S rRNA where it helps nucleate assembly of the platform of the 30S subunit by binding and bridging several RNA helices of the 16S rRNA. Forms an intersubunit bridge (bridge B4) with the 23S rRNA of the 50S subunit in the ribosome. The protein is Small ribosomal subunit protein uS15 of Hyphomonas neptunium (strain ATCC 15444).